A 316-amino-acid chain; its full sequence is tRNA pseudouridine synthase B (316 aa).

The Nucleophile role is filled by Asp-47.

Belongs to the pseudouridine synthase TruB family. Type 1 subfamily.

It carries out the reaction uridine(55) in tRNA = pseudouridine(55) in tRNA. Functionally, responsible for synthesis of pseudouridine from uracil-55 in the psi GC loop of transfer RNAs. The protein is tRNA pseudouridine synthase B of Aliivibrio fischeri (strain MJ11) (Vibrio fischeri).